We begin with the raw amino-acid sequence, 1197 residues long: Protein timeless homolog (1197 aa).

Residues 1–309 (MDLYMMNCEL…GLHNLQNYSS (309 aa)) form a required for homodimerization and for interaction with CRY1 and CHEK1 region. A Phosphoserine modification is found at Ser-281. Disordered stretches follow at residues 647 to 674 (STPLPRQQEPEEGDAEEEEEEEEEEELQ) and 943 to 1002 (RKKL…SAEN). Residues 656-673 (PEEGDAEEEEEEEEEEEL) show a composition bias toward acidic residues. The tract at residues 810–949 (SHRAPLWSPE…KKRRKKLAPS (140 aa)) is DNA-binding domain. Acidic residues predominate over residues 963-985 (QEDPEEEDEHLPEDESEDEESEE). Residues 986–999 (GLPSGQGQGSSSLS) are compositionally biased toward low complexity. An interaction with PARP1 region spans residues 997-1095 (SLSAENLGES…TQLRRVAASL (99 aa)). Residues Ser-1071 and Ser-1084 each carry the phosphoserine modification. A required for nuclear localization region spans residues 1079 to 1197 (IPAKLSSTQL…KRFQIEDEDD (119 aa)). Thr-1086 carries the post-translational modification Phosphothreonine. The disordered stretch occupies residues 1088 to 1197 (LRRVAASLSQ…KRFQIEDEDD (110 aa)). Composition is skewed to acidic residues over residues 1099–1109 (ENEEEREEEPE) and 1143–1153 (TEEEATGEEEW). At Ser-1165 the chain carries Phosphoserine.

This sequence belongs to the timeless family. Monomer. Homodimer or homomultimer. Component of the circadian core oscillator, which includes the CRY proteins, CLOCK or NPAS2, ARTNL/BMAL1 or ARTNL2/BMAL2, CSKN1D and/or CSNK1E, TIMELESS, and the PER proteins. Interacts directly with PER2; the interaction with PER2 is via its second PAS domain. Interacts directly with PER1 and PER3. Interacts with CRY1. Interacts with CRY2. Interacts with CHEK1, ATR and ATRIP. Interacts with CLSPN. Interacts (via N-terminus) with TIPIN. The TIMELESS-TIPIN heterodimer binds preferably to guanine-rich quadruplex-forming (G4) DNA structures. Associates with the MCM2-7 complex. Interacts with DNA polymerases alpha, delta and epsilon. Interacts with DDX11; this interaction increases recruitment of both proteins onto chromatin in response to replication stress induction by hydroxyurea. Interacts with PARP1; interaction is direct and independent of poly-ADP-ribose. In terms of tissue distribution, predominantly and robustly expressed in proliferative organs (spleen, thymus, intestine and testis) compared to those more differentiated such as kidney and liver (at protein level). Expressed in all tissues examined including brain, heart, lung, liver, skeletal muscle, kidney, placenta, pancreas, spleen, thymus and testis. Strongly expressed in the suprachiasmatic nucleus (SCN) and pars tuberalis, moderately in the cingulate cortex, pyrimidal cell layer of the piriform cortex, periventricular part of the caudate putamen, and granular layer of the cerebellum, and weakly in the cerebral cortex, gyrus dentatus, hippocampus and thalamic nuclei. In embryonic kidney, expression is highest in regions of active ureteric bud cell branching.

It is found in the nucleus. The protein resides in the chromosome. In terms of biological role, plays an important role in the control of DNA replication, maintenance of replication fork stability, maintenance of genome stability throughout normal DNA replication, DNA repair and in the regulation of the circadian clock. Required to stabilize replication forks during DNA replication by forming a complex with TIPIN: this complex regulates DNA replication processes under both normal and stress conditions, stabilizes replication forks and influences both CHEK1 phosphorylation and the intra-S phase checkpoint in response to genotoxic stress. During DNA replication, inhibits the CMG complex ATPase activity and activates DNA polymerases catalytic activities, coupling DNA unwinding and DNA synthesis. TIMELESS promotes TIPIN nuclear localization. Plays a role in maintaining processive DNA replication past genomic guanine-rich DNA sequences that form G-quadruplex (G4) structures, possibly together with DDX1. Involved in cell survival after DNA damage or replication stress by promoting DNA repair. In response to double-strand breaks (DSBs), accumulates at DNA damage sites and promotes homologous recombination repair via its interaction with PARP1. May be specifically required for the ATR-CHEK1 pathway in the replication checkpoint induced by hydroxyurea or ultraviolet light. Involved in the determination of period length and in the DNA damage-dependent phase advancing of the circadian clock. Negatively regulates CLOCK|NPAS2-ARTNL/BMAL1|ARTNL2/BMAL2-induced transactivation of PER1 possibly via translocation of PER1 into the nucleus. May also play an important role in epithelial cell morphogenesis and formation of branching tubules. In Mus musculus (Mouse), this protein is Protein timeless homolog.